Consider the following 443-residue polypeptide: Large ribosomal subunit protein mL50 (443 aa).

The segment at 121–145 (QPTRADAPEKIRDPNYEPATSGAGL) is disordered. The span at 126-135 (DAPEKIRDPN) shows a compositional bias: basic and acidic residues.

This sequence belongs to the mitochondrion-specific ribosomal protein mL50 family. As to quaternary structure, component of the mitochondrial large ribosomal subunit (mt-LSU). Mature N.crassa 74S mitochondrial ribosomes consist of a small (37S) and a large (54S) subunit. The 37S small subunit contains a 16S ribosomal RNA (16S mt-rRNA) and 32 different proteins. The 54S large subunit contains a 23S rRNA (23S mt-rRNA) and 42 different proteins.

The protein localises to the mitochondrion. Component of the mitochondrial ribosome (mitoribosome), a dedicated translation machinery responsible for the synthesis of mitochondrial genome-encoded proteins, including at least some of the essential transmembrane subunits of the mitochondrial respiratory chain. The mitoribosomes are attached to the mitochondrial inner membrane and translation products are cotranslationally integrated into the membrane. In Neurospora crassa (strain ATCC 24698 / 74-OR23-1A / CBS 708.71 / DSM 1257 / FGSC 987), this protein is Large ribosomal subunit protein mL50 (mrpl13).